Consider the following 500-residue polypeptide: Low-density lipoprotein receptor-related protein 11 (500 aa).

The N-terminal stretch at 1–37 (MASVAQESAGSQRRLPPRHGALRGLLLLCLWLPSGRA) is a signal peptide. At 38-450 (ALPPAAPLSE…GGEHPAPETG (413 aa)) the chain is on the extracellular side. Positions 99–184 (AMPDAIIRTK…FALHSGYSSY (86 aa)) constitute an MANSC domain. 2 N-linked (GlcNAc...) asparagine glycosylation sites follow: asparagine 164 and asparagine 291. In terms of domain architecture, PKD spans 210–305 (PLSKAGQDVV…VLRAAYSTGG (96 aa)). One can recognise an LDL-receptor class A domain in the interval 309 to 345 (TCSRYHFFCDDGCCIDITLACDGVQQCPDGSDEDFCQ). 3 disulfides stabilise this stretch: cysteine 310-cysteine 322, cysteine 317-cysteine 335, and cysteine 329-cysteine 344. The disordered stretch occupies residues 358-445 (AASPALPRTT…KGDGGGGEHP (88 aa)). A glycan (N-linked (GlcNAc...) asparagine) is linked at asparagine 401. A helical transmembrane segment spans residues 451–473 (AVLPLALGLAITALLLLMVACRL). Topologically, residues 474-500 (RLVKQKLKKARPITSEESDYLINGMYL) are cytoplasmic. Position 491 is a phosphoserine (serine 491).

This sequence belongs to the LDLR family.

Its subcellular location is the membrane. The protein is Low-density lipoprotein receptor-related protein 11 (LRP11) of Homo sapiens (Human).